We begin with the raw amino-acid sequence, 126 residues long: Profilin-2 (126 aa).

The residue at position 2 (Ser2) is a Blocked amino end (Ser). Lys104 carries the post-translational modification N6,N6,N6-trimethyllysine.

The protein belongs to the profilin family. In terms of assembly, occurs in many kinds of cells as a complex with monomeric actin in a 1:1 ratio.

The protein localises to the cytoplasm. It localises to the cytoskeleton. Binds to actin and affects the structure of the cytoskeleton. At high concentrations, profilin prevents the polymerization of actin, whereas it enhances it at low concentrations. By binding to PIP2, it inhibits the formation of IP3 and DG. The protein is Profilin-2 of Acanthamoeba castellanii (Amoeba).